The following is a 227-amino-acid chain: Urease accessory protein UreF (227 aa).

Belongs to the UreF family. In terms of assembly, ureD, UreF and UreG form a complex that acts as a GTP-hydrolysis-dependent molecular chaperone, activating the urease apoprotein by helping to assemble the nickel containing metallocenter of UreC. The UreE protein probably delivers the nickel.

Its subcellular location is the cytoplasm. Functionally, required for maturation of urease via the functional incorporation of the urease nickel metallocenter. This Actinobacillus pleuropneumoniae serotype 5b (strain L20) protein is Urease accessory protein UreF.